Reading from the N-terminus, the 83-residue chain is Small ribosomal subunit protein eS21 (83 aa).

The protein belongs to the eukaryotic ribosomal protein eS21 family. In terms of assembly, component of the 40S small ribosomal subunit. Interacts with sta.

Its subcellular location is the cytoplasm. The protein resides in the cytosol. It is found in the rough endoplasmic reticulum. The chain is Small ribosomal subunit protein eS21 (RpS21) from Ceratitis capitata (Mediterranean fruit fly).